The sequence spans 253 residues: Putative enoyl-CoA hydratase (253 aa).

Glutamate 131 is a catalytic residue.

Belongs to the enoyl-CoA hydratase/isomerase family. Homohexamer; dimer of trimers.

The enzyme catalyses a (3S)-3-hydroxyacyl-CoA = a (2E)-enoyl-CoA + H2O. The polypeptide is Putative enoyl-CoA hydratase (Thermus thermophilus (strain ATCC 27634 / DSM 579 / HB8)).